The sequence spans 123 residues: Small ribosomal subunit protein uS13 (123 aa).

The segment at 96–123 (LPVRGQRTKTNARTRKGPKKTVGARRKK) is disordered.

Belongs to the universal ribosomal protein uS13 family. In terms of assembly, part of the 30S ribosomal subunit. Forms a loose heterodimer with protein S19. Forms two bridges to the 50S subunit in the 70S ribosome.

Its function is as follows. Located at the top of the head of the 30S subunit, it contacts several helices of the 16S rRNA. In the 70S ribosome it contacts the 23S rRNA (bridge B1a) and protein L5 of the 50S subunit (bridge B1b), connecting the 2 subunits; these bridges are implicated in subunit movement. Contacts the tRNAs in the A and P-sites. This chain is Small ribosomal subunit protein uS13, found in Desulforamulus reducens (strain ATCC BAA-1160 / DSM 100696 / MI-1) (Desulfotomaculum reducens).